We begin with the raw amino-acid sequence, 329 residues long: Malate dehydrogenase (329 aa).

12-18 serves as a coordination point for NAD(+); it reads GAAGQIG. The substrate site is built by Arg-95 and Arg-101. NAD(+)-binding positions include Asn-108, Gln-115, and 132 to 134; that span reads VGN. Residues Asn-134 and Arg-165 each coordinate substrate. Residue His-190 is the Proton acceptor of the active site.

This sequence belongs to the LDH/MDH superfamily. MDH type 2 family.

The catalysed reaction is (S)-malate + NAD(+) = oxaloacetate + NADH + H(+). Functionally, catalyzes the reversible oxidation of malate to oxaloacetate. This is Malate dehydrogenase from Polynucleobacter asymbioticus (strain DSM 18221 / CIP 109841 / QLW-P1DMWA-1) (Polynucleobacter necessarius subsp. asymbioticus).